Here is a 52-residue protein sequence, read N- to C-terminus: SVTSYGLSAVVPLKDVVPEWVRIGFSATTGAEYAAHEVLSWSFHSELGGTSS.

It belongs to the leguminous lectin family. In terms of assembly, tetramer of two alpha and two beta chains.

This Vicia sativa (Spring vetch) protein is Mitogenic lectin alpha chain.